Consider the following 288-residue polypeptide: Acetyl-coenzyme A carboxylase carboxyl transferase subunit beta (288 aa).

Positions 34–288 constitute a CoA carboxyltransferase N-terminal domain; the sequence is LFAKCPACKH…HLVAFHGGVS (255 aa). Zn(2+) contacts are provided by Cys-38, Cys-41, Cys-56, and Cys-59. The C4-type zinc finger occupies 38 to 59; the sequence is CPACKHMIYQKDLGPAKICPTC.

Belongs to the AccD/PCCB family. In terms of assembly, acetyl-CoA carboxylase is a heterohexamer composed of biotin carboxyl carrier protein (AccB), biotin carboxylase (AccC) and two subunits each of ACCase subunit alpha (AccA) and ACCase subunit beta (AccD). Requires Zn(2+) as cofactor.

The protein resides in the cytoplasm. The enzyme catalyses N(6)-carboxybiotinyl-L-lysyl-[protein] + acetyl-CoA = N(6)-biotinyl-L-lysyl-[protein] + malonyl-CoA. It participates in lipid metabolism; malonyl-CoA biosynthesis; malonyl-CoA from acetyl-CoA: step 1/1. Component of the acetyl coenzyme A carboxylase (ACC) complex. Biotin carboxylase (BC) catalyzes the carboxylation of biotin on its carrier protein (BCCP) and then the CO(2) group is transferred by the transcarboxylase to acetyl-CoA to form malonyl-CoA. The protein is Acetyl-coenzyme A carboxylase carboxyl transferase subunit beta of Streptococcus equi subsp. zooepidemicus (strain H70).